The chain runs to 85 residues: Alpha-conotoxin Lt28.1 (85 aa).

A signal peptide spans 1–21 (MPKLEMMLLVLLILPLCYIDA). Positions 22–40 (VGPPPPWNMEDEIIEHWQK) are excised as a propeptide. 4 disulfides stabilise this stretch: C61–C74, C66–C84, C67–C79, and C72–C81.

The protein belongs to the conotoxin D superfamily. In terms of tissue distribution, expressed by the venom duct.

Its subcellular location is the secreted. In terms of biological role, alpha-conotoxins act on postsynaptic membranes, they bind to the nicotinic acetylcholine receptors (nAChR) and thus inhibit them. This toxin weakly inhibits alpha-9-alpha-10/CHRNA9-CHRNA10 nAChRs (IC(50)=3 uM). The protein is Alpha-conotoxin Lt28.1 of Conus litteratus (Lettered cone).